The primary structure comprises 416 residues: Putative F-box/kelch-repeat protein At1g12870 (416 aa).

One can recognise an F-box domain in the interval 27–76; that stretch reads MIASSSLPDDVVEEIFLKLPVKALMRFKSLSKQWRSTLESCYFSQRHLKI. Kelch repeat units follow at residues 199–243 and 297–341; these read LVWL…PASA and CMYE…HVLD.

This is Putative F-box/kelch-repeat protein At1g12870 from Arabidopsis thaliana (Mouse-ear cress).